A 400-amino-acid polypeptide reads, in one-letter code: Mu-type opioid receptor (400 aa).

The Extracellular portion of the chain corresponds to Met-1 to Ile-68. N-linked (GlcNAc...) asparagine glycosylation is found at Asn-9, Asn-12, Asn-33, Asn-40, and Asn-48. The helical transmembrane segment at Thr-69 to Tyr-93 threads the bilayer. Residues Val-94–Asn-106 are Cytoplasmic-facing. A helical transmembrane segment spans residues Ile-107 to Leu-131. The Extracellular portion of the chain corresponds to Met-132–Cys-142. Residues Cys-142 and Cys-219 are joined by a disulfide bond. Residues Lys-143 to Val-165 traverse the membrane as a helical segment. Residues Asp-166–Asn-185 lie on the Cytoplasmic side of the membrane. Tyr-168 carries the post-translational modification Phosphotyrosine. A helical membrane pass occupies residues Ala-186 to Met-207. Residues Ala-208 to Trp-230 lie on the Extracellular side of the membrane. A helical membrane pass occupies residues Glu-231–Gly-255. The Cytoplasmic portion of the chain corresponds to Leu-256 to Arg-279. Residues Ile-280 to Ala-306 traverse the membrane as a helical segment. Residues Leu-307–Thr-314 are Extracellular-facing. The helical transmembrane segment at Phe-315–Tyr-338 threads the bilayer. An NPxxY; plays a role in stabilizing the activated conformation of the receptor motif is present at residues Asn-334–Tyr-338. Residues Ala-339–Pro-400 lie on the Cytoplasmic side of the membrane. A lipid anchor (S-palmitoyl cysteine) is attached at Cys-353. Phosphoserine is present on Ser-365. Thr-372 is modified (phosphothreonine). Phosphoserine is present on Ser-377. Phosphothreonine is present on Thr-396.

This sequence belongs to the G-protein coupled receptor 1 family. As to quaternary structure, forms homooligomers and heterooligomers with other GPCRs, such as OPRD1, OPRK1, OPRL1, NPFFR2, ADRA2A, SSTR2, CNR1 and CCR5 (probably in dimeric forms). Interacts with heterotrimeric G proteins; interaction with a heterotrimeric complex containing GNAI1, GNB1 and GNG2 stabilizes the active conformation of the receptor and increases its affinity for endomorphin-2, the synthetic opioid peptide DAMGO and for morphinan agonists. Interacts with PPL; the interaction disrupts agonist-mediated G-protein activation. Interacts (via C-terminus) with DNAJB4 (via C-terminus). Interacts with calmodulin; the interaction inhibits the constitutive activity of OPRM1; it abolishes basal and attenuates agonist-stimulated G-protein coupling. Interacts with FLNA, PLD2, RANBP9 and WLS and GPM6A. Interacts with RTP4. Interacts with SYP and GNAS. Interacts with RGS9, RGS17, RGS20, RGS4, PPP1R9B and HINT1. Phosphorylated. Differentially phosphorylated in basal and agonist-induced conditions. Agonist-mediated phosphorylation modulates receptor internalization. Phosphorylated by GRK2 in a agonist-dependent manner. Phosphorylation at Tyr-168 requires receptor activation, is dependent on non-receptor protein tyrosine kinase Src and results in a decrease in agonist efficacy by reducing G-protein coupling efficiency. Phosphorylated on tyrosine residues; the phosphorylation is involved in agonist-induced G-protein-independent receptor down-regulation. Phosphorylation at Ser-377 is involved in G-protein-dependent but not beta-arrestin-dependent activation of the ERK pathway. In terms of processing, ubiquitinated. A basal ubiquitination seems not to be related to degradation. Ubiquitination is increased upon formation of OPRM1:OPRD1 oligomers leading to proteasomal degradation; the ubiquitination is diminished by RTP4. As to expression, expressed in brain. Isoform 16 and isoform 17 are detected in brain.

It is found in the cell membrane. It localises to the cell projection. The protein localises to the axon. The protein resides in the perikaryon. Its subcellular location is the dendrite. It is found in the endosome. It localises to the cytoplasm. In terms of biological role, receptor for endogenous opioids such as beta-endorphin and endomorphin. Receptor for natural and synthetic opioids including morphine, heroin, DAMGO, fentanyl, etorphine, buprenorphin and methadone. Also activated by enkephalin peptides, such as Met-enkephalin or Met-enkephalin-Arg-Phe, with higher affinity for Met-enkephalin-Arg-Phe. Agonist binding to the receptor induces coupling to an inactive GDP-bound heterotrimeric G-protein complex and subsequent exchange of GDP for GTP in the G-protein alpha subunit leading to dissociation of the G-protein complex with the free GTP-bound G-protein alpha and the G-protein beta-gamma dimer activating downstream cellular effectors. The agonist- and cell type-specific activity is predominantly coupled to pertussis toxin-sensitive G(i) and G(o) G alpha proteins, GNAI1, GNAI2, GNAI3 and GNAO1 isoforms Alpha-1 and Alpha-2, and to a lesser extent to pertussis toxin-insensitive G alpha proteins GNAZ and GNA15. They mediate an array of downstream cellular responses, including inhibition of adenylate cyclase activity and both N-type and L-type calcium channels, activation of inward rectifying potassium channels, mitogen-activated protein kinase (MAPK), phospholipase C (PLC), phosphoinositide/protein kinase (PKC), phosphoinositide 3-kinase (PI3K) and regulation of NF-kappa-B. Also couples to adenylate cyclase stimulatory G alpha proteins. The selective temporal coupling to G-proteins and subsequent signaling can be regulated by RGSZ proteins, such as RGS9, RGS17 and RGS4. Phosphorylation by members of the GPRK subfamily of Ser/Thr protein kinases and association with beta-arrestins is involved in short-term receptor desensitization. Beta-arrestins associate with the GPRK-phosphorylated receptor and uncouple it from the G-protein thus terminating signal transduction. The phosphorylated receptor is internalized through endocytosis via clathrin-coated pits which involves beta-arrestins. The activation of the ERK pathway occurs either in a G-protein-dependent or a beta-arrestin-dependent manner and is regulated by agonist-specific receptor phosphorylation. Acts as a class A G-protein coupled receptor (GPCR) which dissociates from beta-arrestin at or near the plasma membrane and undergoes rapid recycling. Receptor down-regulation pathways are varying with the agonist and occur dependent or independent of G-protein coupling. Endogenous ligands induce rapid desensitization, endocytosis and recycling. Heterooligomerization with other GPCRs can modulate agonist binding, signaling and trafficking properties. Couples to GNAS and is proposed to be involved in excitatory effects. Functionally, does not bind agonists but may act through oligomerization with binding-competent OPRM1 isoforms and reduce their ligand binding activity. The protein is Mu-type opioid receptor (OPRM1) of Homo sapiens (Human).